The following is a 557-amino-acid chain: D-arabinono-1,4-lactone oxidase (557 aa).

The region spanning 26–209 is the FAD-binding PCMH-type domain; sequence FFCKPQAIFQ…THVTLRTIPK (184 aa). Pros-8alpha-FAD histidine is present on histidine 63.

It belongs to the oxygen-dependent FAD-linked oxidoreductase family. Requires FAD as cofactor.

Its subcellular location is the mitochondrion membrane. The enzyme catalyses D-arabinono-1,4-lactone + O2 = dehydro-D-arabinono-1,4-lactone + H2O2 + H(+). It participates in cofactor biosynthesis; D-erythroascorbate biosynthesis; dehydro-D-arabinono-1,4-lactone from D-arabinose: step 2/2. The sequence is that of D-arabinono-1,4-lactone oxidase (ALO1) from Debaryomyces hansenii (strain ATCC 36239 / CBS 767 / BCRC 21394 / JCM 1990 / NBRC 0083 / IGC 2968) (Yeast).